Consider the following 329-residue polypeptide: 4-hydroxythreonine-4-phosphate dehydrogenase (329 aa).

Positions 136 and 137 each coordinate substrate. A divalent metal cation is bound by residues His166, His211, and His266. Lys274, Asn283, and Arg292 together coordinate substrate.

This sequence belongs to the PdxA family. In terms of assembly, homodimer. It depends on Zn(2+) as a cofactor. Mg(2+) is required as a cofactor. The cofactor is Co(2+).

The protein localises to the cytoplasm. It catalyses the reaction 4-(phosphooxy)-L-threonine + NAD(+) = 3-amino-2-oxopropyl phosphate + CO2 + NADH. Its pathway is cofactor biosynthesis; pyridoxine 5'-phosphate biosynthesis; pyridoxine 5'-phosphate from D-erythrose 4-phosphate: step 4/5. Its function is as follows. Catalyzes the NAD(P)-dependent oxidation of 4-(phosphooxy)-L-threonine (HTP) into 2-amino-3-oxo-4-(phosphooxy)butyric acid which spontaneously decarboxylates to form 3-amino-2-oxopropyl phosphate (AHAP). The chain is 4-hydroxythreonine-4-phosphate dehydrogenase from Neisseria meningitidis serogroup B (strain ATCC BAA-335 / MC58).